The chain runs to 224 residues: Protein GrpE (224 aa).

2 stretches are compositionally biased toward polar residues: residues 1 to 16 and 209 to 224; these read MSGDASTSAQDQNVES and ESSSDAASEQPQEGDA. 2 disordered regions span residues 1 to 35 and 203 to 224; these read MSGDASTSAQDQNVESNDVPAIPDVDAGTPIDPVV and SMGPGPESSSDAASEQPQEGDA.

Belongs to the GrpE family. As to quaternary structure, homodimer.

The protein localises to the cytoplasm. In terms of biological role, participates actively in the response to hyperosmotic and heat shock by preventing the aggregation of stress-denatured proteins, in association with DnaK and GrpE. It is the nucleotide exchange factor for DnaK and may function as a thermosensor. Unfolded proteins bind initially to DnaJ; upon interaction with the DnaJ-bound protein, DnaK hydrolyzes its bound ATP, resulting in the formation of a stable complex. GrpE releases ADP from DnaK; ATP binding to DnaK triggers the release of the substrate protein, thus completing the reaction cycle. Several rounds of ATP-dependent interactions between DnaJ, DnaK and GrpE are required for fully efficient folding. This chain is Protein GrpE, found in Synechococcus sp. (strain CC9902).